Consider the following 300-residue polypeptide: Cholesterol 25-hydroxylase-like protein (300 aa).

N9 carries N-linked (GlcNAc...) asparagine glycosylation. A run of 3 helical transmembrane segments spans residues 43–63, 95–115, and 130–152; these read LFPP…FTFI, LQGW…LIWV, and MVSQ…HYFN. A Fatty acid hydroxylase domain is found at 135–266; the sequence is AIFFLAFDFT…WFNYLDRLMG (132 aa). Positions 148–152 match the Histidine box-1 motif; sequence FHYFN. The Histidine box-2 signature appears at 163–167; that stretch reads HSVHH. Residues 180-200 form a helical membrane-spanning segment; it reads LHPFELFFVATFITTVPWIFP. The Histidine box-3 signature appears at 242–248; the sequence is AHDMHHL.

The protein belongs to the sterol desaturase family. Fe cation is required as a cofactor.

The protein localises to the membrane. Probable sterol desaturase. The chain is Cholesterol 25-hydroxylase-like protein from Caenorhabditis briggsae.